Reading from the N-terminus, the 559-residue chain is Potassium-transporting ATPase potassium-binding subunit (559 aa).

13 helical membrane passes run 5-25, 27-47, 63-83, 132-152, 170-190, 253-273, 283-303, 327-347, 356-376, 379-399, 416-436, 484-504, and 524-544; these read GFLLIASFLLILLVLAKPLGS, LARLIAAVPLPGVAGVERILW, LLALLTLNLLGLGILFCLLFW, GLTVQNFLSAATGIAVVFALI, LVRITLWILFPVALIIALFFI, LAQMLAIFLIPAALCFAFGEA, LLWAMSFIFVVCVAVVMWAEV, FGVLASSLFAVVTTAASCGAV, ALGGMVPMWLMQIGEVVFGGV, GLYGMLLFVLLAVFIAGLMIG, MTALAILVTPMLVLLGSALAM, LLAFCMFVGRFGVIIPVMAIA, and GALFIGLLIGTVLLVGALTFI.

This sequence belongs to the KdpA family. The system is composed of three essential subunits: KdpA, KdpB and KdpC.

The protein resides in the cell inner membrane. Part of the high-affinity ATP-driven potassium transport (or Kdp) system, which catalyzes the hydrolysis of ATP coupled with the electrogenic transport of potassium into the cytoplasm. This subunit binds the periplasmic potassium ions and delivers the ions to the membrane domain of KdpB through an intramembrane tunnel. The sequence is that of Potassium-transporting ATPase potassium-binding subunit from Salmonella choleraesuis (strain SC-B67).